The primary structure comprises 561 residues: Lysine--tRNA ligase (561 aa).

Mg(2+) is bound by residues glutamate 409 and glutamate 416.

The protein belongs to the class-II aminoacyl-tRNA synthetase family. Homodimer. It depends on Mg(2+) as a cofactor.

Its subcellular location is the cytoplasm. It catalyses the reaction tRNA(Lys) + L-lysine + ATP = L-lysyl-tRNA(Lys) + AMP + diphosphate. The protein is Lysine--tRNA ligase of Nostoc punctiforme (strain ATCC 29133 / PCC 73102).